A 186-amino-acid chain; its full sequence is Large ribosomal subunit protein uL5 (186 aa).

This sequence belongs to the universal ribosomal protein uL5 family. As to quaternary structure, part of the 50S ribosomal subunit; part of the 5S rRNA/L5/L18/L25 subcomplex. Contacts the 5S rRNA and the P site tRNA. Forms a bridge to the 30S subunit in the 70S ribosome.

This is one of the proteins that bind and probably mediate the attachment of the 5S RNA into the large ribosomal subunit, where it forms part of the central protuberance. In the 70S ribosome it contacts protein S13 of the 30S subunit (bridge B1b), connecting the 2 subunits; this bridge is implicated in subunit movement. Contacts the P site tRNA; the 5S rRNA and some of its associated proteins might help stabilize positioning of ribosome-bound tRNAs. This Jannaschia sp. (strain CCS1) protein is Large ribosomal subunit protein uL5.